Here is a 113-residue protein sequence, read N- to C-terminus: Na(+)/H(+) antiporter subunit C1 (113 aa).

Transmembrane regions (helical) follow at residues 1–21 (MEIIMIFVSGILTAISVYLVL), 28–48 (IVMGTTLLTHAANLFLITMGG), and 72–92 (LILTAIVIAFATTAFFLVLAF).

It belongs to the CPA3 antiporters (TC 2.A.63) subunit C family. In terms of assembly, may form a heterooligomeric complex that consists of seven subunits: mnhA1, mnhB1, mnhC1, mnhD1, mnhE1, mnhF1 and mnhG1.

Its subcellular location is the cell membrane. Mnh complex is a Na(+)/H(+) antiporter involved in Na(+) excretion. The sequence is that of Na(+)/H(+) antiporter subunit C1 (mnhC1) from Staphylococcus aureus (strain JH1).